We begin with the raw amino-acid sequence, 105 residues long: Large ribosomal subunit protein P1 (105 aa).

The residue at position 1 (Met-1) is a Blocked amino end (Met). Residues 65 to 76 show a composition bias toward low complexity; it reads VAAPAGQQTQQA. The tract at residues 65–105 is disordered; it reads VAAPAGQQTQQAAEKKEEKKEEEKKGPSEEEIGGGLSSLFG. Positions 77-92 are enriched in basic and acidic residues; sequence AEKKEEKKEEEKKGPS.

This sequence belongs to the eukaryotic ribosomal protein P1/P2 family. Part of the 50S ribosomal subunit. Homodimer, it forms part of the ribosomal stalk which helps the ribosome interact with GTP-bound translation factors. Forms a heptameric uL10/P0(P1)2(P1)2(P1)2 complex, where uL10/P0 forms an elongated spine to which the P1 dimers bind in a sequential fashion.

In terms of biological role, forms part of the ribosomal stalk, playing a central role in the interaction of the ribosome with GTP-bound translation factors. This Sulfolobus acidocaldarius (strain ATCC 33909 / DSM 639 / JCM 8929 / NBRC 15157 / NCIMB 11770) protein is Large ribosomal subunit protein P1.